A 348-amino-acid polypeptide reads, in one-letter code: Structural glycoprotein p40 (348 aa).

The protein belongs to the baculoviridae gp41 family. O-glycosylated; contains N-acetylglucosamine side chains.

The sequence is that of Structural glycoprotein p40 (P40) from Bombyx mori nuclear polyhedrosis virus (BmNPV).